The chain runs to 69 residues: DNA-directed RNA polymerase subunit epsilon (69 aa).

Belongs to the RNA polymerase subunit epsilon family. In terms of assembly, monomer. RNAP is composed of a core of 2 alpha, a beta and a beta' subunit. The core is associated with a delta subunit, and at least one of epsilon or omega. When a sigma factor is associated with the core the holoenzyme is formed, which can initiate transcription.

The protein localises to the cytoplasm. It localises to the nucleoid. It carries out the reaction RNA(n) + a ribonucleoside 5'-triphosphate = RNA(n+1) + diphosphate. In terms of biological role, a non-essential component of RNA polymerase (RNAP). Has a similar structure to bacteriophage T7 protein Gp2 (AC P03704), which is known to bind to RNAP in the DNA binding-cleft. Unlike Gp2 however, this protein does not inhibit transcription initiation. In vitro reconstitution experiments show this subunit is dispensible. This Bacillus subtilis (strain 168) protein is DNA-directed RNA polymerase subunit epsilon.